The primary structure comprises 173 residues: Flagellar biosynthetic protein FliV (173 aa).

It belongs to the FliB family.

Required for the secretion of flagellin and expression of motility. The polypeptide is Flagellar biosynthetic protein FliV (fliV) (Salmonella muenchen).